The chain runs to 410 residues: Peptidase T (410 aa).

His-79 is a binding site for Zn(2+). Asp-81 is an active-site residue. Zn(2+) is bound at residue Asp-142. Glu-176 (proton acceptor) is an active-site residue. Residues Glu-177, Asp-199, and His-381 each contribute to the Zn(2+) site.

This sequence belongs to the peptidase M20B family. It depends on Zn(2+) as a cofactor.

The protein resides in the cytoplasm. The catalysed reaction is Release of the N-terminal residue from a tripeptide.. Functionally, cleaves the N-terminal amino acid of tripeptides. The polypeptide is Peptidase T (Bacillus thuringiensis (strain Al Hakam)).